We begin with the raw amino-acid sequence, 149 residues long: Large ribosomal subunit protein uL11 (149 aa).

Belongs to the universal ribosomal protein uL11 family. In terms of assembly, part of the ribosomal stalk of the 50S ribosomal subunit. Interacts with L10 and the large rRNA to form the base of the stalk. L10 forms an elongated spine to which L12 dimers bind in a sequential fashion forming a multimeric L10(L12)X complex. In terms of processing, one or more lysine residues are methylated.

In terms of biological role, forms part of the ribosomal stalk which helps the ribosome interact with GTP-bound translation factors. In Methylobacterium sp. (strain 4-46), this protein is Large ribosomal subunit protein uL11.